The sequence spans 284 residues: Small ribosomal subunit protein uS2 (284 aa).

This sequence belongs to the universal ribosomal protein uS2 family.

In Mycoplasma genitalium (strain ATCC 33530 / DSM 19775 / NCTC 10195 / G37) (Mycoplasmoides genitalium), this protein is Small ribosomal subunit protein uS2 (rpsB).